Reading from the N-terminus, the 685-residue chain is Translation factor GUF1 homolog, mitochondrial (685 aa).

The N-terminal 54 residues, 1-54 (MFSRLLNRGNGGVNKNITSGLLLRRTTTTTTRLSYINNSPTLSIRSFCSKSTTI), are a transit peptide targeting the mitochondrion. The tr-type G domain occupies 68-267 (DRIRNFSIIA…AVIDRIPPPQ (200 aa)). Residues 77-84 (AHIDHGKT), 160-164 (DTPGH), and 214-217 (NKID) contribute to the GTP site.

Belongs to the TRAFAC class translation factor GTPase superfamily. Classic translation factor GTPase family. LepA subfamily.

It localises to the mitochondrion inner membrane. The catalysed reaction is GTP + H2O = GDP + phosphate + H(+). In terms of biological role, promotes mitochondrial protein synthesis. May act as a fidelity factor of the translation reaction, by catalyzing a one-codon backward translocation of tRNAs on improperly translocated ribosomes. Binds to mitochondrial ribosomes in a GTP-dependent manner. The polypeptide is Translation factor GUF1 homolog, mitochondrial (guf1) (Dictyostelium discoideum (Social amoeba)).